Here is a 459-residue protein sequence, read N- to C-terminus: N,N-dimethyl phenylurea N-demethylase subunit alpha (459 aa).

One can recognise a Rieske domain in the interval 55-166; the sequence is WVFVAHETEI…VESYHGFIFT (112 aa). Cysteine 97, histidine 99, cysteine 117, and histidine 120 together coordinate [2Fe-2S] cluster. Positions 225, 230, and 386 each coordinate Fe cation.

It belongs to the bacterial ring-hydroxylating dioxygenase alpha subunit family. PdmA (subunit alpha) and PdmB (subunit beta) form the oxygenase component of a bacterial Rieske non-heme iron oxygenase (RO) system. Requires [2Fe-2S] cluster as cofactor. Fe cation serves as cofactor.

It catalyses the reaction a 1,1-dimethyl-3-phenylurea + 2 reduced [2Fe-2S]-[ferredoxin] + O2 + 2 H(+) = a 1-methyl-3-phenylurea + formaldehyde + 2 oxidized [2Fe-2S]-[ferredoxin] + H2O. The enzyme catalyses isoproturon + 2 reduced [2Fe-2S]-[ferredoxin] + O2 + 2 H(+) = 1-methyl-3-[4-(propan-2-yl)phenyl]urea + formaldehyde + 2 oxidized [2Fe-2S]-[ferredoxin] + H2O. It carries out the reaction chlorotoluron + 2 reduced [2Fe-2S]-[ferredoxin] + O2 + 2 H(+) = 3-(3-chloro-4-methylphenyl)-1-methylurea + formaldehyde + 2 oxidized [2Fe-2S]-[ferredoxin] + H2O. The catalysed reaction is metoxuron + 2 reduced [2Fe-2S]-[ferredoxin] + O2 + 2 H(+) = 3-(3-chloro-4-methoxylphenyl)-1-methylurea + formaldehyde + 2 oxidized [2Fe-2S]-[ferredoxin] + H2O. It catalyses the reaction monuron + 2 reduced [2Fe-2S]-[ferredoxin] + O2 + 2 H(+) = 3-(4-chlorophenyl)-1-methylurea + formaldehyde + 2 oxidized [2Fe-2S]-[ferredoxin] + H2O. The enzyme catalyses diuron + 2 reduced [2Fe-2S]-[ferredoxin] + O2 + 2 H(+) = 3-(3,4-dichlorophenyl)-1-methylurea + formaldehyde + 2 oxidized [2Fe-2S]-[ferredoxin] + H2O. It carries out the reaction fluometuron + 2 reduced [2Fe-2S]-[ferredoxin] + O2 + 2 H(+) = 3-[3-(trifluoromethyl)phenyl]-1-methylurea + formaldehyde + 2 oxidized [2Fe-2S]-[ferredoxin] + H2O. The catalysed reaction is fenuron + 2 reduced [2Fe-2S]-[ferredoxin] + O2 + 2 H(+) = 1-methyl-3-phenylurea + formaldehyde + 2 oxidized [2Fe-2S]-[ferredoxin] + H2O. It participates in xenobiotic degradation. Its activity is regulated as follows. Activity is stimulated in vitro by coexpression of a [3Fe-4S]-type ferredoxin. Its function is as follows. Part of the multicomponent N,N-dimethyl phenylurea N-demethylase responsible for the initial N-demethylation step during the bacterial metabolism of N,N-dimethyl-substituted phenylurea herbicides. Catalyzes the mono-N-demethylation of N,N-dimethyl-substituted phenylurea herbicides to their mono-N-demethylated derivatives. Is active on isoproturon (IPU), chlorotoluron, metoxuron, monoron, diuron, fluometuron and fenuron, but cannot transform the N-methoxy-N-methyl-substituted herbicides. In Sphingobium sp. (strain YBL2), this protein is N,N-dimethyl phenylurea N-demethylase subunit alpha.